Consider the following 352-residue polypeptide: Phenylalanine--tRNA ligase alpha subunit (352 aa).

Position 258 (Glu-258) interacts with Mg(2+).

It belongs to the class-II aminoacyl-tRNA synthetase family. Phe-tRNA synthetase alpha subunit type 1 subfamily. In terms of assembly, tetramer of two alpha and two beta subunits. Mg(2+) is required as a cofactor.

The protein resides in the cytoplasm. The catalysed reaction is tRNA(Phe) + L-phenylalanine + ATP = L-phenylalanyl-tRNA(Phe) + AMP + diphosphate + H(+). This Staphylococcus aureus (strain Mu3 / ATCC 700698) protein is Phenylalanine--tRNA ligase alpha subunit.